We begin with the raw amino-acid sequence, 463 residues long: Asparagine--tRNA ligase (463 aa).

The protein belongs to the class-II aminoacyl-tRNA synthetase family. As to quaternary structure, homodimer.

Its subcellular location is the cytoplasm. The catalysed reaction is tRNA(Asn) + L-asparagine + ATP = L-asparaginyl-tRNA(Asn) + AMP + diphosphate + H(+). This Clostridium novyi (strain NT) protein is Asparagine--tRNA ligase.